The sequence spans 360 residues: Probable dual-specificity RNA methyltransferase RlmN (360 aa).

Residue E103 is the Proton acceptor of the active site. A Radical SAM core domain is found at 109–342 (HEYGNSVCVT…VTIRREQGHD (234 aa)). A disulfide bridge connects residues C116 and C347. [4Fe-4S] cluster-binding residues include C123, C127, and C130. S-adenosyl-L-methionine-binding positions include 173-174 (GE), S205, 228-230 (SLH), and N304. Residue C347 is the S-methylcysteine intermediate of the active site.

This sequence belongs to the radical SAM superfamily. RlmN family. The cofactor is [4Fe-4S] cluster.

The protein resides in the cytoplasm. The catalysed reaction is adenosine(2503) in 23S rRNA + 2 reduced [2Fe-2S]-[ferredoxin] + 2 S-adenosyl-L-methionine = 2-methyladenosine(2503) in 23S rRNA + 5'-deoxyadenosine + L-methionine + 2 oxidized [2Fe-2S]-[ferredoxin] + S-adenosyl-L-homocysteine. It carries out the reaction adenosine(37) in tRNA + 2 reduced [2Fe-2S]-[ferredoxin] + 2 S-adenosyl-L-methionine = 2-methyladenosine(37) in tRNA + 5'-deoxyadenosine + L-methionine + 2 oxidized [2Fe-2S]-[ferredoxin] + S-adenosyl-L-homocysteine. Its function is as follows. Specifically methylates position 2 of adenine 2503 in 23S rRNA and position 2 of adenine 37 in tRNAs. This is Probable dual-specificity RNA methyltransferase RlmN from Bacillus pumilus (strain SAFR-032).